The chain runs to 527 residues: EGF domain-specific O-linked N-acetylglucosamine transferase (527 aa).

A signal peptide spans 1–17; that stretch reads MLMLFVFGVLLHEVSLS. Positions 295 to 297 match the Required for optimal activity motif; sequence DYD. An N-linked (GlcNAc...) asparagine glycan is attached at Asn-354. The Prevents secretion from ER signature appears at 524-527; the sequence is HDEL.

It belongs to the glycosyltransferase 61 family.

Its subcellular location is the endoplasmic reticulum lumen. The catalysed reaction is L-seryl-[protein] + UDP-N-acetyl-alpha-D-glucosamine = 3-O-(N-acetyl-beta-D-glucosaminyl)-L-seryl-[protein] + UDP + H(+). The enzyme catalyses L-threonyl-[protein] + UDP-N-acetyl-alpha-D-glucosamine = 3-O-(N-acetyl-beta-D-glucosaminyl)-L-threonyl-[protein] + UDP + H(+). Catalyzes the transfer of a single N-acetylglucosamine from UDP-GlcNAc to a serine or threonine residue in extracellular proteins resulting in their modification with a beta-linked N-acetylglucosamine (O-GlcNAc). Specifically glycosylates the Thr residue located between the fifth and sixth conserved cysteines of folded EGF-like domains. In Pan troglodytes (Chimpanzee), this protein is EGF domain-specific O-linked N-acetylglucosamine transferase (EOGT).